Consider the following 223-residue polypeptide: Noggin (223 aa).

The first 26 residues, 1 to 26, serve as a signal peptide directing secretion; that stretch reads MDHSQCLVTIYAAAVLLGLRLQQGSC. Residue N61 is glycosylated (N-linked (GlcNAc...) asparagine). 4 cysteine pairs are disulfide-bonded: C146–C183, C169–C219, C175–C221, and C198–C206.

The protein belongs to the noggin family. Homodimer.

It is found in the secreted. In terms of biological role, inhibitor of bone morphogenetic proteins (BMP) signaling. Controls somitogenesis by sequestering the BMP-4 activity which in turn differentiates distinct subtypes of the mesoderm along the mediolateral axis. The sequence is that of Noggin (NOG) from Gallus gallus (Chicken).